A 712-amino-acid chain; its full sequence is Effector protein HopM1 (712 aa).

The tract at residues 22–58 (DTVPAQTAHPNAVTAGMNPPLTPDQSGSHATESSSAG) is disordered. A compositionally biased stretch (polar residues) spans 44–57 (PDQSGSHATESSSA).

As to quaternary structure, interacts with the chaperone ShcM. Interacts with host plant BIG5/ATMIN7.

The protein localises to the secreted. It is found in the host membrane. Functionally, involved in the suppression of basal resistance and promotion of disease symptoms in plants. Mediates the ubiquitination and degradation, via the host proteasome, of a low-abundance immunity-associated protein in Arabidopsis thaliana. May be involved in the inhibition of a host vesicle trafficking pathway. The chain is Effector protein HopM1 (hopM1) from Pseudomonas syringae pv. tomato (strain ATCC BAA-871 / DC3000).